The sequence spans 192 residues: Thiosulfate reductase electron transfer subunit PhsB (192 aa).

3 4Fe-4S ferredoxin-type domains span residues Tyr-8–Gly-36, Thr-55–Asn-86, and Gly-87–Gln-116. Cys-17, Cys-20, Cys-23, Cys-27, Cys-64, Cys-67, Cys-72, Cys-76, Cys-96, Cys-99, Cys-102, Cys-106, Cys-123, Cys-126, Cys-139, and Cys-143 together coordinate [4Fe-4S] cluster.

In terms of assembly, composed of three subunits: PhsA, PhsB and PhsC. [4Fe-4S] cluster serves as cofactor.

The protein localises to the cell inner membrane. Its function is as follows. Component of the PhsABC thiosulfate reductase that catalyzes the reduction of thiosulfate to sulfite and hydrogen sulfide, with menaquinol as the sole electron donor. Proton motive force (PMF) is required to drive transmembrane electron transfer within the reductase. The PhsB subunit transfers electrons between PhsC and PhsA. The sequence is that of Thiosulfate reductase electron transfer subunit PhsB (phsB) from Salmonella typhi.